A 388-amino-acid polypeptide reads, in one-letter code: Spermosin (388 aa).

The first 22 residues, 1-22 (MAAINVIFISGAIALFALTGSC), serve as a signal peptide directing secretion. Residues 29–49 (FTNKPYATQNPYSPPQTNQPT) are compositionally biased toward polar residues. Positions 29-98 (FTNKPYATQN…SENSESENSE (70 aa)) are disordered. Residues 54–64 (QPGPAPTPAPY) are compositionally biased toward pro residues. Cystine bridges form between cysteine 116–cysteine 251, cysteine 163–cysteine 179, cysteine 265–cysteine 330, cysteine 295–cysteine 310, and cysteine 320–cysteine 349. The region spanning 130–372 (IVGGAEAVPN…NLEWLCCYMP (243 aa)) is the Peptidase S1 domain. Residues histidine 178 and aspartate 231 each act as charge relay system in the active site. Serine 324 functions as the Charge relay system in the catalytic mechanism.

Belongs to the peptidase S1 family. As to quaternary structure, heterodimer of a heavy chain and either an L1 light chain or an L2 light chain linked by a disulfide bond. Detected in sperm, but not in unfertilized eggs (at protein level). Expressed in gonad, but not in hepatopancreas, intestine or branchial basket.

It localises to the secreted. It carries out the reaction Hydrolyzes arginyl bonds, preferably with Pro in the P2 position.. Inhibited by peptidyl-argininals with Pro in the P2 position, diisopropyl fluorophosphate, phenylmethanesulfonyl fluoride, leupeptin, antipain, soybean trypsin inhibitor, aprotinin, ovomucoid, valyl-prolyl-arginyl-chloromethane, glycyl-valyl-arginyl-chloromethane, p-aminobenzamidine, benzamidine, zinc chloride and mercuric chloride. Its function is as follows. Trypsin-like protease with a narrow substrate specificity. Preferentially hydrolyzes substrates with Pro in the P2 position and Val in the P3 position. Plays a role in fertilization. The polypeptide is Spermosin (Halocynthia roretzi (Sea squirt)).